Consider the following 766-residue polypeptide: Isocitrate lyase 2 (766 aa).

106–108 (GGW) serves as a coordination point for substrate. Asp177 is a binding site for Mg(2+). Cys215 acts as the Proton acceptor in catalysis. Residues 216-217 (GH), Arg252, 487-491 (NLSPS), and Thr522 each bind substrate.

It belongs to the isocitrate lyase/PEP mutase superfamily. Isocitrate lyase family. Mg(2+) is required as a cofactor.

The catalysed reaction is D-threo-isocitrate = glyoxylate + succinate. It participates in carbohydrate metabolism; glyoxylate cycle; (S)-malate from isocitrate: step 1/2. Its function is as follows. Involved in the persistence and virulence of Mycobacterium. Catalyzes the reversible formation of succinate and glyoxylate from isocitrate, a key step of the glyoxylate cycle, which operates as an anaplerotic route for replenishing the tricarboxylic acid cycle during growth on fatty acid substrates. The chain is Isocitrate lyase 2 (aceA) from Mycobacterium bovis (strain ATCC BAA-935 / AF2122/97).